Reading from the N-terminus, the 420-residue chain is D-tagatose-1,6-bisphosphate aldolase subunit GatZ (420 aa).

Belongs to the GatZ/KbaZ family. GatZ subfamily. Forms a complex with GatY.

Its pathway is carbohydrate metabolism; D-tagatose 6-phosphate degradation; D-glyceraldehyde 3-phosphate and glycerone phosphate from D-tagatose 6-phosphate: step 2/2. In terms of biological role, component of the tagatose-1,6-bisphosphate aldolase GatYZ that is required for full activity and stability of the Y subunit. Could have a chaperone-like function for the proper and stable folding of GatY. When expressed alone, GatZ does not show any aldolase activity. Is involved in the catabolism of galactitol. The protein is D-tagatose-1,6-bisphosphate aldolase subunit GatZ of Escherichia coli (strain SE11).